Here is a 334-residue protein sequence, read N- to C-terminus: NH(3)-dependent NAD(+) synthetase (334 aa).

ATP is bound at residue 47 to 54; the sequence is GLSGGIDS. Asp53 provides a ligand contact to Mg(2+). Arg183 is a binding site for deamido-NAD(+). Residue Thr203 coordinates ATP. Residue Glu208 coordinates Mg(2+). The deamido-NAD(+) site is built by Lys216 and Asp223. Residues Lys232 and Thr254 each coordinate ATP.

Belongs to the NAD synthetase family. In terms of assembly, homodimer.

The enzyme catalyses deamido-NAD(+) + NH4(+) + ATP = AMP + diphosphate + NAD(+) + H(+). It participates in cofactor biosynthesis; NAD(+) biosynthesis; NAD(+) from deamido-NAD(+) (ammonia route): step 1/1. Catalyzes the ATP-dependent amidation of deamido-NAD to form NAD. Uses ammonia as a nitrogen source. The chain is NH(3)-dependent NAD(+) synthetase from Rhizobium meliloti (strain 1021) (Ensifer meliloti).